A 278-amino-acid chain; its full sequence is Thiazole synthase (278 aa).

Residue Lys109 is the Schiff-base intermediate with DXP of the active site. 1-deoxy-D-xylulose 5-phosphate is bound by residues Gly170, 197 to 198 (AG), and 219 to 220 (NT).

Belongs to the ThiG family. In terms of assembly, homotetramer. Forms heterodimers with either ThiH or ThiS.

The protein localises to the cytoplasm. The catalysed reaction is [ThiS sulfur-carrier protein]-C-terminal-Gly-aminoethanethioate + 2-iminoacetate + 1-deoxy-D-xylulose 5-phosphate = [ThiS sulfur-carrier protein]-C-terminal Gly-Gly + 2-[(2R,5Z)-2-carboxy-4-methylthiazol-5(2H)-ylidene]ethyl phosphate + 2 H2O + H(+). Its pathway is cofactor biosynthesis; thiamine diphosphate biosynthesis. Functionally, catalyzes the rearrangement of 1-deoxy-D-xylulose 5-phosphate (DXP) to produce the thiazole phosphate moiety of thiamine. Sulfur is provided by the thiocarboxylate moiety of the carrier protein ThiS. In vitro, sulfur can be provided by H(2)S. The sequence is that of Thiazole synthase from Cupriavidus necator (strain ATCC 17699 / DSM 428 / KCTC 22496 / NCIMB 10442 / H16 / Stanier 337) (Ralstonia eutropha).